The sequence spans 450 residues: 23S rRNA (uracil(1939)-C(5))-methyltransferase RlmD (450 aa).

Positions 1–62 (MPVAGPLEIV…PSYEQATLVD (62 aa)) constitute a TRAM domain. Residues Cys-75, Cys-81, Cys-84, and Cys-163 each coordinate [4Fe-4S] cluster. Positions 271, 300, 305, 321, 349, and 370 each coordinate S-adenosyl-L-methionine. Cys-406 functions as the Nucleophile in the catalytic mechanism.

Belongs to the class I-like SAM-binding methyltransferase superfamily. RNA M5U methyltransferase family. RlmD subfamily.

It carries out the reaction uridine(1939) in 23S rRNA + S-adenosyl-L-methionine = 5-methyluridine(1939) in 23S rRNA + S-adenosyl-L-homocysteine + H(+). In terms of biological role, catalyzes the formation of 5-methyl-uridine at position 1939 (m5U1939) in 23S rRNA. The chain is 23S rRNA (uracil(1939)-C(5))-methyltransferase RlmD from Ralstonia nicotianae (strain ATCC BAA-1114 / GMI1000) (Ralstonia solanacearum).